A 92-amino-acid polypeptide reads, in one-letter code: Small ribosomal subunit protein uS19 (92 aa).

Belongs to the universal ribosomal protein uS19 family.

Its function is as follows. Protein S19 forms a complex with S13 that binds strongly to the 16S ribosomal RNA. This Orientia tsutsugamushi (strain Boryong) (Rickettsia tsutsugamushi) protein is Small ribosomal subunit protein uS19.